A 185-amino-acid polypeptide reads, in one-letter code: Ribosome-recycling factor (185 aa).

The protein belongs to the RRF family.

It localises to the cytoplasm. Responsible for the release of ribosomes from messenger RNA at the termination of protein biosynthesis. May increase the efficiency of translation by recycling ribosomes from one round of translation to another. The sequence is that of Ribosome-recycling factor from Xanthomonas campestris pv. campestris (strain 8004).